The sequence spans 534 residues: SWI/SNF complex component SNF12 homolog (534 aa).

Residues 1 to 12 (MSGNNNNPQKPQ) show a composition bias toward polar residues. 2 disordered regions span residues 1–33 (MSGN…PGNQ) and 78–132 (MTMN…SPMR). The span at 94–105 (PSSPSLTTPGSL) shows a compositional bias: low complexity. In terms of domain architecture, SWIB/MDM2 spans 314-391 (YVPEKFKLST…SQKISHHLSP (78 aa)).

This sequence belongs to the SMARCD family. As to quaternary structure, part of a SWI-SNF complex.

It localises to the nucleus. In terms of biological role, involved in transcriptional activation and repression of select genes by chromatin remodeling (alteration of DNA-nucleosome topology). This is SWI/SNF complex component SNF12 homolog from Arabidopsis thaliana (Mouse-ear cress).